The sequence spans 228 residues: L-ribulose-5-phosphate 4-epimerase UlaF (228 aa).

Substrate contacts are provided by residues Gly-26–Asn-27, Ser-43–Gly-44, and Ser-72–Ser-73. Residues Asp-74, His-93, and His-95 each coordinate Zn(2+). Asp-118 serves as the catalytic Proton donor/acceptor. A Zn(2+)-binding site is contributed by His-167. Residue Tyr-225 is the Proton donor/acceptor of the active site.

This sequence belongs to the aldolase class II family. AraD/FucA subfamily. Zn(2+) serves as cofactor.

The catalysed reaction is L-ribulose 5-phosphate = D-xylulose 5-phosphate. Its pathway is cofactor degradation; L-ascorbate degradation; D-xylulose 5-phosphate from L-ascorbate: step 4/4. Its function is as follows. Catalyzes the isomerization of L-ribulose 5-phosphate to D-xylulose 5-phosphate. Is involved in the anaerobic L-ascorbate utilization. In Escherichia coli (strain K12 / MC4100 / BW2952), this protein is L-ribulose-5-phosphate 4-epimerase UlaF.